The following is a 390-amino-acid chain: Putative 8-amino-7-oxononanoate synthase (390 aa).

Arginine 20 is a substrate binding site. 107–108 (GY) contacts pyridoxal 5'-phosphate. Residue histidine 132 coordinates substrate. Pyridoxal 5'-phosphate is bound by residues serine 181, 206–209 (DDAH), and 237–240 (TLGK). N6-(pyridoxal phosphate)lysine is present on lysine 240. Threonine 356 is a binding site for substrate.

Belongs to the class-II pyridoxal-phosphate-dependent aminotransferase family. BioF subfamily. In terms of assembly, homodimer. Pyridoxal 5'-phosphate serves as cofactor.

The catalysed reaction is 6-carboxyhexanoyl-[ACP] + L-alanine + H(+) = (8S)-8-amino-7-oxononanoate + holo-[ACP] + CO2. Its pathway is cofactor biosynthesis; biotin biosynthesis. In terms of biological role, catalyzes the decarboxylative condensation of pimeloyl-[acyl-carrier protein] and L-alanine to produce 8-amino-7-oxononanoate (AON), [acyl-carrier protein], and carbon dioxide. In Syntrophotalea carbinolica (strain DSM 2380 / NBRC 103641 / GraBd1) (Pelobacter carbinolicus), this protein is Putative 8-amino-7-oxononanoate synthase (bioF).